We begin with the raw amino-acid sequence, 263 residues long: MGDLWVLLFSSLSLAAFHGVRGCLECDPKFTEDVRTLLGNLVPLEVPDRNQLLDRQHKEITHISSKVSHKDKMLRLLAVRNVIKLREWLKDEFYRLGNETWKGVFIIQGNLLEIRQNLEKKLTQIIKNFSEVACSEDCIVIEGPVLDCWNCLRMTTRCFKGDYCQDEDPKTAENREISLYLIFIAEAVILASAVLLFHVCISHRRKMKAIRRTLKTYLEKKLEELVEMIYKDDGEKNLEFGRSNSNSLTGEPTCAESEMQTGT.

The signal sequence occupies residues 1 to 22 (MGDLWVLLFSSLSLAAFHGVRG). Over 23–176 (CLECDPKFTE…EDPKTAENRE (154 aa)) the chain is Extracellular. N-linked (GlcNAc...) asparagine glycans are attached at residues asparagine 98 and asparagine 128. The chain crosses the membrane as a helical span at residues 177 to 197 (ISLYLIFIAEAVILASAVLLF). Topologically, residues 198–263 (HVCISHRRKM…CAESEMQTGT (66 aa)) are cytoplasmic. The disordered stretch occupies residues 241–263 (GRSNSNSLTGEPTCAESEMQTGT).

This sequence belongs to the Izumo family. In terms of assembly, monomer and homodimer. Sperm-specific (at protein level).

The protein resides in the cell membrane. The protein localises to the cytoplasmic vesicle. It localises to the secretory vesicle. Its subcellular location is the acrosome inner membrane. Its function is as follows. Plays an important role in the biogenesis of the acrosome during sperm development. The polypeptide is Izumo sperm-egg fusion protein 3 (Izumo3) (Mus musculus (Mouse)).